The following is a 398-amino-acid chain: 4-hydroxy-3-methylbut-2-enyl diphosphate reductase (398 aa).

Residue cysteine 66 coordinates [4Fe-4S] cluster. Histidine 96 is a binding site for (2E)-4-hydroxy-3-methylbut-2-enyl diphosphate. Histidine 96 is a dimethylallyl diphosphate binding site. Histidine 96 contacts isopentenyl diphosphate. Cysteine 157 lines the [4Fe-4S] cluster pocket. Histidine 185 is a (2E)-4-hydroxy-3-methylbut-2-enyl diphosphate binding site. Histidine 185 serves as a coordination point for dimethylallyl diphosphate. Histidine 185 is an isopentenyl diphosphate binding site. Residue glutamate 187 is the Proton donor of the active site. Threonine 250 contributes to the (2E)-4-hydroxy-3-methylbut-2-enyl diphosphate binding site. Residue cysteine 288 coordinates [4Fe-4S] cluster. Residues serine 317, serine 318, asparagine 319, and serine 380 each contribute to the (2E)-4-hydroxy-3-methylbut-2-enyl diphosphate site. The dimethylallyl diphosphate site is built by serine 317, serine 318, asparagine 319, and serine 380. Positions 317, 318, 319, and 380 each coordinate isopentenyl diphosphate.

It belongs to the IspH family. [4Fe-4S] cluster serves as cofactor.

It carries out the reaction isopentenyl diphosphate + 2 oxidized [2Fe-2S]-[ferredoxin] + H2O = (2E)-4-hydroxy-3-methylbut-2-enyl diphosphate + 2 reduced [2Fe-2S]-[ferredoxin] + 2 H(+). It catalyses the reaction dimethylallyl diphosphate + 2 oxidized [2Fe-2S]-[ferredoxin] + H2O = (2E)-4-hydroxy-3-methylbut-2-enyl diphosphate + 2 reduced [2Fe-2S]-[ferredoxin] + 2 H(+). It functions in the pathway isoprenoid biosynthesis; dimethylallyl diphosphate biosynthesis; dimethylallyl diphosphate from (2E)-4-hydroxy-3-methylbutenyl diphosphate: step 1/1. Its pathway is isoprenoid biosynthesis; isopentenyl diphosphate biosynthesis via DXP pathway; isopentenyl diphosphate from 1-deoxy-D-xylulose 5-phosphate: step 6/6. Catalyzes the conversion of 1-hydroxy-2-methyl-2-(E)-butenyl 4-diphosphate (HMBPP) into a mixture of isopentenyl diphosphate (IPP) and dimethylallyl diphosphate (DMAPP). Acts in the terminal step of the DOXP/MEP pathway for isoprenoid precursor biosynthesis. This is 4-hydroxy-3-methylbut-2-enyl diphosphate reductase from Prochlorococcus marinus (strain MIT 9515).